The following is a 406-amino-acid chain: MAKKEVKKIVLAYSGGLDTSIILKWLKNEYGCEVVTFSADLGQGDELEPVREKAFKTGADKVYIDDLREEFVRDFVYPMFRANAIYEGSYLLGTSIARPLIAKRQMEIAKIEGCDAVSHGATGKGNDQVRFELAYYHFNPGITVVAPWREWKLNSRQALINYAKRNDIPIPITKKRPWSSDRNLLHISFEGGILEDTWLEPPENMFVLTKAPEKAPNKPQYIEIEFEKGNAVAVDGVRMSPAELLAHLNTIGGEHGIGRVDLLENRSVGMKSRGVYETPGGTILREAHMAVEQITMDREVMHLRDSLIPRYAEMIYNGYWFSPEREMMQCMIDESQKTVNGVARLKLYKGHCRTVGRKSESDSLFNLDFATFEKDQVYNQADAEGFIKLNSLRLRIRSLMLANKNK.

ATP is bound by residues 12 to 20 and A39; that span reads AYSGGLDTS. Residues Y90 and S95 each contribute to the L-citrulline site. An ATP-binding site is contributed by G120. 3 residues coordinate L-aspartate: T122, N126, and D127. N126 contacts L-citrulline. L-citrulline contacts are provided by R130, S179, S188, E264, and Y276.

This sequence belongs to the argininosuccinate synthase family. Type 1 subfamily. Homotetramer.

It is found in the cytoplasm. It catalyses the reaction L-citrulline + L-aspartate + ATP = 2-(N(omega)-L-arginino)succinate + AMP + diphosphate + H(+). It participates in amino-acid biosynthesis; L-arginine biosynthesis; L-arginine from L-ornithine and carbamoyl phosphate: step 2/3. This Citrifermentans bemidjiense (strain ATCC BAA-1014 / DSM 16622 / JCM 12645 / Bem) (Geobacter bemidjiensis) protein is Argininosuccinate synthase.